A 555-amino-acid chain; its full sequence is Potassium-transporting ATPase potassium-binding subunit (555 aa).

Helical transmembrane passes span 2 to 22 (IWVAVIITMLLFILVAKPTGI), 60 to 80 (QYALSLVLLNGFMIVVVYFIF), 130 to 150 (IGITFLMFAAPATTLALVMAF), 173 to 193 (VFLPIAFIAALVFVALGVPQT), 246 to 266 (MSNILQMMLMMLLPTALPFTY), 278 to 298 (ILFVSLFMVFLLGFITITTSE), 374 to 394 (AGFVNIIMYAIIAVFISGLMV), 412 to 432 (LIAVTILFHPLLILGFSALAL), 483 to 503 (LVMFLGRYFSLITMLAVAASL), and 525 to 545 (GIFIGTIVIVGALTFFPMLVL).

This sequence belongs to the KdpA family. In terms of assembly, the system is composed of three essential subunits: KdpA, KdpB and KdpC.

The protein resides in the cell membrane. Functionally, part of the high-affinity ATP-driven potassium transport (or Kdp) system, which catalyzes the hydrolysis of ATP coupled with the electrogenic transport of potassium into the cytoplasm. This subunit binds the extracellular potassium ions and delivers the ions to the membrane domain of KdpB through an intramembrane tunnel. In Bacillus cereus (strain G9842), this protein is Potassium-transporting ATPase potassium-binding subunit.